A 770-amino-acid chain; its full sequence is Nucleus-vacuole junction protein 2 (770 aa).

Topologically, residues 1–5 (MASLK) are cytoplasmic. A helical; Signal-anchor for type II membrane protein transmembrane segment spans residues 6–26 (VFLAVYLLGGITFLPLVLFTL). Residues 27–770 (YKIHLLYSNL…EFEEQREPKL (744 aa)) are Lumenal-facing. A PH domain is found at 114–266 (TALQEQILQR…WYYQLINASK (153 aa)). N-linked (GlcNAc...) asparagine glycans are attached at residues Asn-228, Asn-263, Asn-279, Asn-300, Asn-391, Asn-528, and Asn-529. Residues 304 to 504 (NQLTTKWLNA…YPTPNEVYRG (201 aa)) enclose the SMP-LTD domain. Disordered regions lie at residues 541-566 (EGGMKTQSRIKKALRPERKKENLKDL), 578-600 (TQTTVTTATNDDVSSSENSTKSR), and 615-770 (KDNV…EPKL). Basic and acidic residues predominate over residues 554-566 (LRPERKKENLKDL). Residues 587–596 (NDDVSSSENS) show a composition bias toward polar residues. N-linked (GlcNAc...) asparagine glycans are attached at residues Asn-595 and Asn-620. Residues Ser-640 and Ser-669 each carry the phosphoserine modification. A compositionally biased stretch (basic and acidic residues) spans 679–688 (LEGRKEKDTE). N-linked (GlcNAc...) asparagine glycosylation occurs at Asn-700. Composition is skewed to polar residues over residues 713 to 725 (FSVSSNDSQNSLK) and 736 to 751 (LESSQAFVKKTSQNRF). A Phosphoserine modification is found at Ser-717. Asn-718 is a glycosylation site (N-linked (GlcNAc...) asparagine). Residues Ser-720 and Ser-723 each carry the phosphoserine modification. Over residues 756–770 (FKQDLEFEEQREPKL) the composition is skewed to basic and acidic residues.

The protein resides in the endoplasmic reticulum membrane. It is found in the nucleus membrane. During endoplasmic reticulum (ER) stress or when cellular ceramide levels increase, induces contacts between the ER and medial-Golgi complex to facilitate non-vesicular transport of ceramides from the ER to the Golgi complex where they are converted to complex sphingolipids, preventing toxic ceramide accumulation. The polypeptide is Nucleus-vacuole junction protein 2 (Saccharomyces cerevisiae (strain ATCC 204508 / S288c) (Baker's yeast)).